A 355-amino-acid chain; its full sequence is UDP-N-acetylglucosamine--N-acetylmuramyl-(pentapeptide) pyrophosphoryl-undecaprenol N-acetylglucosamine transferase (355 aa).

UDP-N-acetyl-alpha-D-glucosamine is bound by residues 15 to 17, Asn-127, Arg-163, Ser-191, Ile-244, 263 to 268, and Gln-288; these read TGG and ALTVSE.

It belongs to the glycosyltransferase 28 family. MurG subfamily.

It localises to the cell inner membrane. The enzyme catalyses di-trans,octa-cis-undecaprenyl diphospho-N-acetyl-alpha-D-muramoyl-L-alanyl-D-glutamyl-meso-2,6-diaminopimeloyl-D-alanyl-D-alanine + UDP-N-acetyl-alpha-D-glucosamine = di-trans,octa-cis-undecaprenyl diphospho-[N-acetyl-alpha-D-glucosaminyl-(1-&gt;4)]-N-acetyl-alpha-D-muramoyl-L-alanyl-D-glutamyl-meso-2,6-diaminopimeloyl-D-alanyl-D-alanine + UDP + H(+). It participates in cell wall biogenesis; peptidoglycan biosynthesis. Cell wall formation. Catalyzes the transfer of a GlcNAc subunit on undecaprenyl-pyrophosphoryl-MurNAc-pentapeptide (lipid intermediate I) to form undecaprenyl-pyrophosphoryl-MurNAc-(pentapeptide)GlcNAc (lipid intermediate II). This is UDP-N-acetylglucosamine--N-acetylmuramyl-(pentapeptide) pyrophosphoryl-undecaprenol N-acetylglucosamine transferase from Salmonella choleraesuis (strain SC-B67).